Reading from the N-terminus, the 347-residue chain is Ribosomal RNA large subunit methyltransferase M (347 aa).

S-adenosyl-L-methionine contacts are provided by residues Ser184, 217-220 (APGG), Asp236, Asp256, and Asp272. Lys301 serves as the catalytic Proton acceptor.

It belongs to the class I-like SAM-binding methyltransferase superfamily. RNA methyltransferase RlmE family. RlmM subfamily. As to quaternary structure, monomer.

The protein localises to the cytoplasm. It carries out the reaction cytidine(2498) in 23S rRNA + S-adenosyl-L-methionine = 2'-O-methylcytidine(2498) in 23S rRNA + S-adenosyl-L-homocysteine + H(+). Functionally, catalyzes the 2'-O-methylation at nucleotide C2498 in 23S rRNA. The sequence is that of Ribosomal RNA large subunit methyltransferase M from Xanthomonas oryzae pv. oryzae (strain MAFF 311018).